A 109-amino-acid polypeptide reads, in one-letter code: Class I hydrophobin 18 (109 aa).

Positions Met-1–Ala-20 are cleaved as a signal peptide. 4 cysteine pairs are disulfide-bonded: Cys-28-Cys-88, Cys-35-Cys-82, Cys-36-Cys-69, and Cys-89-Cys-102. 2 N-linked (GlcNAc...) asparagine glycosylation sites follow: Asn-91 and Asn-106.

The protein belongs to the fungal hydrophobin family. Self-assembles to form functional amyloid fibrils called rodlets. Self-assembly into fibrillar rodlets occurs spontaneously at hydrophobic:hydrophilic interfaces and the rodlets further associate laterally to form amphipathic monolayers.

The protein resides in the secreted. The protein localises to the cell wall. Its function is as follows. Aerial growth, conidiation, and dispersal of filamentous fungi in the environment rely upon a capability of their secreting small amphipathic proteins called hydrophobins (HPBs) with low sequence identity. Class I can self-assemble into an outermost layer of rodlet bundles on aerial cell surfaces, conferring cellular hydrophobicity that supports fungal growth, development and dispersal; whereas Class II form highly ordered films at water-air interfaces through intermolecular interactions but contribute nothing to the rodlet structure. This Pleurotus ostreatus (strain PC15) (Oyster mushroom) protein is Class I hydrophobin 18.